The following is a 91-amino-acid chain: Auxin-responsive protein SAUR20 (91 aa).

This sequence belongs to the ARG7 family.

It localises to the cell membrane. In terms of biological role, functions as a positive effector of cell expansion through modulation of auxin transport. The chain is Auxin-responsive protein SAUR20 from Arabidopsis thaliana (Mouse-ear cress).